Consider the following 634-residue polypeptide: Proline and serine-rich protein 3 (634 aa).

5 disordered regions span residues 1-69 (MFPK…LIDN), 81-142 (FRQA…TSLA), 185-242 (DASS…ATLK), 368-455 (VPPT…FEGP), and 472-534 (FPDS…TAPK). Polar residues predominate over residues 15 to 24 (RTGATRSQRP). Composition is skewed to low complexity over residues 40–56 (ESWPSSSWTPSPASTTE), 128–140 (VTGPSPTGVSSTS), and 185–202 (DASSSSFPISSDGLSPSS). Over residues 203-215 (VTFNPDSNKSSNP) the composition is skewed to polar residues. Residues 368 to 377 (VPPTSTSTTP) show a composition bias toward low complexity. The span at 378–399 (APTPTPQVCIPGPPTSAPPPCA) shows a compositional bias: pro residues. Over residues 436–448 (VSTSSHQKTTVPD) the composition is skewed to polar residues. Over residues 503-515 (PESRRGSKTESRK) the composition is skewed to basic and acidic residues. S588 is subject to Phosphoserine.

The protein localises to the cytoplasm. Its subcellular location is the cytoskeleton. It localises to the microtubule organizing center. The protein resides in the centrosome. The sequence is that of Proline and serine-rich protein 3 (Proser3) from Mus musculus (Mouse).